Reading from the N-terminus, the 145-residue chain is FAD synthase (145 aa).

ATP contacts are provided by residues 9–10, 14–17, Asp94, and Tyr122; these read TF and HPGH.

It belongs to the archaeal FAD synthase family. Homodimer. The cofactor is a divalent metal cation.

It carries out the reaction FMN + ATP + H(+) = FAD + diphosphate. It functions in the pathway cofactor biosynthesis; FAD biosynthesis; FAD from FMN: step 1/1. In terms of biological role, catalyzes the transfer of the AMP portion of ATP to flavin mononucleotide (FMN) to produce flavin adenine dinucleotide (FAD) coenzyme. This Methanocaldococcus infernus (strain DSM 11812 / JCM 15783 / ME) protein is FAD synthase.